Reading from the N-terminus, the 297-residue chain is MRIVLITGISGSGKSVALNALEDAGYYCVDNLPPHVLPELARYLAHEGQNRLAVAIDARSSASLDEMPGLIRALSHEHDVRVLFLNASTQALIQRFSETRRRHPLSGSPSHDADVGLLVSLEEAIERERELVAPLAEFGHQIDTSNLRANVLRTWVKRFIEQKNDDLVLMFESFGFKRGVPLDADFMFDVRALPNPYYDHELRPLTGLDQPVVAFLDALPVVHQMLDDIETFLVKWLPHFREDNRSYLTVAIGCTGGQHRSVFLAETLAARLSRQASVIVRHRDAPVAVDASSRLVT.

8–15 (GISGSGKS) serves as a coordination point for ATP. GTP is bound at residue 57-60 (DARS).

It belongs to the RapZ-like family.

Displays ATPase and GTPase activities. In Burkholderia mallei (strain NCTC 10229), this protein is Nucleotide-binding protein BMA10229_A1510.